The chain runs to 370 residues: Queuine tRNA-ribosyltransferase (370 aa).

Asp-89 functions as the Proton acceptor in the catalytic mechanism. Substrate is bound by residues 89–93 (DSGGF), Asp-143, Gln-187, and Gly-214. Positions 245-251 (GVGKPEN) are RNA binding. Asp-264 acts as the Nucleophile in catalysis. The segment at 269-273 (TRNAR) is RNA binding; important for wobble base 34 recognition. 4 residues coordinate Zn(2+): Cys-302, Cys-304, Cys-307, and His-333.

The protein belongs to the queuine tRNA-ribosyltransferase family. Homodimer. Within each dimer, one monomer is responsible for RNA recognition and catalysis, while the other monomer binds to the replacement base PreQ1. Requires Zn(2+) as cofactor.

It catalyses the reaction 7-aminomethyl-7-carbaguanine + guanosine(34) in tRNA = 7-aminomethyl-7-carbaguanosine(34) in tRNA + guanine. It participates in tRNA modification; tRNA-queuosine biosynthesis. In terms of biological role, catalyzes the base-exchange of a guanine (G) residue with the queuine precursor 7-aminomethyl-7-deazaguanine (PreQ1) at position 34 (anticodon wobble position) in tRNAs with GU(N) anticodons (tRNA-Asp, -Asn, -His and -Tyr). Catalysis occurs through a double-displacement mechanism. The nucleophile active site attacks the C1' of nucleotide 34 to detach the guanine base from the RNA, forming a covalent enzyme-RNA intermediate. The proton acceptor active site deprotonates the incoming PreQ1, allowing a nucleophilic attack on the C1' of the ribose to form the product. After dissociation, two additional enzymatic reactions on the tRNA convert PreQ1 to queuine (Q), resulting in the hypermodified nucleoside queuosine (7-(((4,5-cis-dihydroxy-2-cyclopenten-1-yl)amino)methyl)-7-deazaguanosine). This Hamiltonella defensa subsp. Acyrthosiphon pisum (strain 5AT) protein is Queuine tRNA-ribosyltransferase.